A 141-amino-acid chain; its full sequence is Large ribosomal subunit protein uL11 (141 aa).

This sequence belongs to the universal ribosomal protein uL11 family. In terms of assembly, part of the ribosomal stalk of the 50S ribosomal subunit. Interacts with L10 and the large rRNA to form the base of the stalk. L10 forms an elongated spine to which L12 dimers bind in a sequential fashion forming a multimeric L10(L12)X complex. Post-translationally, one or more lysine residues are methylated.

In terms of biological role, forms part of the ribosomal stalk which helps the ribosome interact with GTP-bound translation factors. The sequence is that of Large ribosomal subunit protein uL11 from Clostridium perfringens (strain ATCC 13124 / DSM 756 / JCM 1290 / NCIMB 6125 / NCTC 8237 / Type A).